We begin with the raw amino-acid sequence, 255 residues long: Urease accessory protein UreD 1 (255 aa).

The protein belongs to the UreD family. UreD, UreF and UreG form a complex that acts as a GTP-hydrolysis-dependent molecular chaperone, activating the urease apoprotein by helping to assemble the nickel containing metallocenter of UreC. The UreE protein probably delivers the nickel.

It localises to the cytoplasm. In terms of biological role, required for maturation of urease via the functional incorporation of the urease nickel metallocenter. This Saccharopolyspora erythraea (strain ATCC 11635 / DSM 40517 / JCM 4748 / NBRC 13426 / NCIMB 8594 / NRRL 2338) protein is Urease accessory protein UreD 1.